The sequence spans 206 residues: uncharacterized protein (206 aa).

The helical transmembrane segment at 21–43 (VPINITMSICALTALLKSYSITG) threads the bilayer.

The protein localises to the membrane. This is an uncharacterized protein from Acanthamoeba polyphaga (Amoeba).